The chain runs to 257 residues: Proteasome assembly chaperone 1 (257 aa).

Belongs to the PSMG1 family. Forms a heterodimer with psmg2.

Chaperone protein which promotes assembly of the 20S proteasome as part of a heterodimer with psmg2. This is Proteasome assembly chaperone 1 (psmg1) from Nematostella vectensis (Starlet sea anemone).